Here is a 555-residue protein sequence, read N- to C-terminus: Glucose-6-phosphate isomerase (555 aa).

D-glucose 6-phosphate is bound by residues 169–170 (GS), 219–224 (SKTFTT), Gln364, Glu368, His399, and Lys521. Glu368 (proton donor) is an active-site residue. Catalysis depends on residues His399 and Lys521.

Belongs to the GPI family. In terms of assembly, homodimer.

It localises to the cytoplasm. It is found in the cytosol. The catalysed reaction is alpha-D-glucose 6-phosphate = beta-D-fructose 6-phosphate. Its pathway is carbohydrate degradation; glycolysis; D-glyceraldehyde 3-phosphate and glycerone phosphate from D-glucose: step 2/4. Its function is as follows. In the cytoplasm, catalyzes the conversion of glucose-6-phosphate to fructose-6-phosphate, the second step in glycolysis, and the reverse reaction during gluconeogenesis. The chain is Glucose-6-phosphate isomerase (RAG2) from Kluyveromyces lactis (strain ATCC 8585 / CBS 2359 / DSM 70799 / NBRC 1267 / NRRL Y-1140 / WM37) (Yeast).